The sequence spans 145 residues: Large-conductance mechanosensitive channel (145 aa).

Helical transmembrane passes span 14 to 34, 38 to 58, and 81 to 101; these read VMDL…VKSL, LIMP…YFLP, and GSFL…FLMV.

Belongs to the MscL family. Homopentamer.

The protein resides in the cell inner membrane. Functionally, channel that opens in response to stretch forces in the membrane lipid bilayer. May participate in the regulation of osmotic pressure changes within the cell. In Rhizobium johnstonii (strain DSM 114642 / LMG 32736 / 3841) (Rhizobium leguminosarum bv. viciae), this protein is Large-conductance mechanosensitive channel.